The sequence spans 240 residues: Probable xyloglucan-specific endo-beta-1,4-glucanase A (240 aa).

A signal peptide spans 1–15 (MKFLTPLVLSSLASA).

This sequence belongs to the glycosyl hydrolase 12 (cellulase H) family.

Its subcellular location is the secreted. The catalysed reaction is xyloglucan + H2O = xyloglucan oligosaccharides.. Its function is as follows. Catalyzes endohydrolysis of 1,4-beta-D-glucosidic linkages in xyloglucan with retention of the beta-configuration of the glycosyl residues. Specific for xyloglucan and does not hydrolyze other cell wall components. This is Probable xyloglucan-specific endo-beta-1,4-glucanase A (xgeA) from Aspergillus oryzae (strain ATCC 42149 / RIB 40) (Yellow koji mold).